Here is a 706-residue protein sequence, read N- to C-terminus: Glutamine-dependent NAD(+) synthetase (706 aa).

The 271-residue stretch at 5–275 folds into the CN hydrolase domain; that stretch reads VTVATCALNQ…VEVLTATLDL (271 aa). E45 acts as the Proton acceptor; for glutaminase activity in catalysis. K114 functions as the For glutaminase activity in the catalytic mechanism. The active-site Nucleophile; for glutaminase activity is the C175. Residues 325–706 are ligase; the sequence is YHSPEEEISL…AAPQSLDGVD (382 aa). 355–362 contacts ATP; it reads PLSGGVDS. Residue S357 is part of the active site.

In the C-terminal section; belongs to the NAD synthetase family. As to quaternary structure, homohexamer.

It catalyses the reaction deamido-NAD(+) + L-glutamine + ATP + H2O = L-glutamate + AMP + diphosphate + NAD(+) + H(+). It participates in cofactor biosynthesis; NAD(+) biosynthesis; NAD(+) from deamido-NAD(+) (L-Gln route): step 1/1. In terms of biological role, catalyzes the final step of the nicotinamide adenine dinucleotide (NAD) de novo synthesis pathway, the ATP-dependent amidation of deamido-NAD using L-glutamine as a nitrogen source. The protein is Glutamine-dependent NAD(+) synthetase (NADSYN1) of Macaca fascicularis (Crab-eating macaque).